A 605-amino-acid polypeptide reads, in one-letter code: MIDKLGDFKRDYFCGELTENNIGDEVRLLGWADSVRDHGGVIFINLRDKEGIIQVVIDPSKSPKEAYEKAKKVRSEYVLAVRGRVQRRPAGTENPKLPTGTIEIAVDELRILNTCDILPFPIEDGISAHEEVRLRYRFLDIRRPEMMKKLILRHEVYQATREYLAGHGFLEVETPMLTKSTPEGARDFLVPARLEKGKFYALPQSPQLFKQILMVSGIDRYFQIVKCFRDEDLRKDRQPEFTQIDFEMSFVDEEDVITVSEGLIHYIFKKVLGIELKLPFKRMSYTEAIERYGTDKPDLRYSLELKDITDIAKDVQFKVFKDTVEKGGIVKGINVKGGSKFSRKEIDDLTEEAKKYGAKGMAWIKINEDGSLQSPIVKFFTEEQINKIKEIMEGENGDLLIFIADSYEITHRVLGFLRKHLAEKLKLIPENVWEFVWVVDFPLVEWDEEEGRLVALHHPFTSPKEEDIDRLDEAIQDKKVALSFRSRAYDLVLNGEEIGGGSIRIHSSHIQKKVFELLGISDEEAEEKFGFLINALKYGAPPHGGLAFGLDRIVALMTGSESIRDVIAFPKTQKGICPLTDAPDFVQEDQLEELGIEVNIPEETV.

L-aspartate is bound at residue Glu-183. Residues 207–210 form an aspartate region; sequence QLFK. Arg-229 serves as a coordination point for L-aspartate. ATP-binding positions include 229–231 and Gln-238; that span reads RDE. His-457 is a binding site for L-aspartate. Position 497 (Glu-497) interacts with ATP. L-aspartate is bound at residue Arg-504. ATP is bound at residue 549-552; that stretch reads GLDR.

It belongs to the class-II aminoacyl-tRNA synthetase family. Type 1 subfamily. In terms of assembly, homodimer.

Its subcellular location is the cytoplasm. The catalysed reaction is tRNA(Asx) + L-aspartate + ATP = L-aspartyl-tRNA(Asx) + AMP + diphosphate. In terms of biological role, aspartyl-tRNA synthetase with relaxed tRNA specificity since it is able to aspartylate not only its cognate tRNA(Asp) but also tRNA(Asn). Reaction proceeds in two steps: L-aspartate is first activated by ATP to form Asp-AMP and then transferred to the acceptor end of tRNA(Asp/Asn). The protein is Aspartate--tRNA(Asp/Asn) ligase of Persephonella marina (strain DSM 14350 / EX-H1).